The primary structure comprises 88 residues: Exodeoxyribonuclease 7 small subunit (88 aa).

The protein belongs to the XseB family. In terms of assembly, heterooligomer composed of large and small subunits.

It is found in the cytoplasm. It carries out the reaction Exonucleolytic cleavage in either 5'- to 3'- or 3'- to 5'-direction to yield nucleoside 5'-phosphates.. In terms of biological role, bidirectionally degrades single-stranded DNA into large acid-insoluble oligonucleotides, which are then degraded further into small acid-soluble oligonucleotides. In Tolumonas auensis (strain DSM 9187 / NBRC 110442 / TA 4), this protein is Exodeoxyribonuclease 7 small subunit.